A 212-amino-acid chain; its full sequence is MQLTMSSSKMKSLLKGLRYISQVFESEKEEEIQIGNPTDVKHVAHIGWDGPSANATAPSWMTEFNSGGGFESAEGVGEDDSSIKCMSEYGGRSRDLPNLPKSTRKAASEKGSPTKDKSSDKTKRRSSNKGTSSSSRRPKEATEEQDELSSWPSGLPEIPKKSRRKKKSTKETAVNGGSSRSTRRSDVDNMSEYMSETGSVRSMPQFDNRDDF.

The region spanning 34–47 is the CRIB domain; the sequence is IGNPTDVKHVAHIG. The interval 51 to 212 is disordered; it reads PSANATAPSW…MPQFDNRDDF (162 aa). Residues 53–65 are compositionally biased toward polar residues; the sequence is ANATAPSWMTEFN. Residues 106–121 show a composition bias toward basic and acidic residues; the sequence is AASEKGSPTKDKSSDK. Over residues 192-202 the composition is skewed to polar residues; the sequence is EYMSETGSVRS.

Interacts with ARAC11/ROP1. As to expression, expressed in flowers and pollen.

It is found in the cell membrane. Functions as a downstream effector of Rho-related GTP binding proteins of the 'Rho of Plants' (ROPs) family. Participates in the propagation of ROP GTPase signals in specific cellular responses. Is involved in pollen tube growth regulation through its interaction with ARAC11/ROP1. In Arabidopsis thaliana (Mouse-ear cress), this protein is CRIB domain-containing protein RIC6 (RIC6).